Consider the following 116-residue polypeptide: Large ribosomal subunit protein bL20 (116 aa).

It belongs to the bacterial ribosomal protein bL20 family.

Its function is as follows. Binds directly to 23S ribosomal RNA and is necessary for the in vitro assembly process of the 50S ribosomal subunit. It is not involved in the protein synthesizing functions of that subunit. In Helicobacter pylori (strain P12), this protein is Large ribosomal subunit protein bL20.